The primary structure comprises 2345 residues: Nonribisomal peptide synthetase malG (2345 aa).

An adenylation 1 region spans residues 226–620 (FSEQAKKNPT…VGRMGTVVKV (395 aa)). Positions 766–839 (TENETLLRLL…EAAGTMISAG (74 aa)) constitute a Carrier 1 domain. O-(pantetheine 4'-phosphoryl)serine is present on Ser800. A condensation 1 region spans residues 877–1292 (EEIYPSTPLQ…LLCPSDKSKL (416 aa)). Positions 1317–1707 (VRSERTAVSA…GRKNREVKLR (391 aa)) are adenylation 2. The 84-residue stretch at 1843–1926 (QPHESTALFV…DIARLIEGVK (84 aa)) folds into the Carrier 2 domain. Ser1885 bears the O-(pantetheine 4'-phosphoryl)serine mark. The tract at residues 1969–2256 (GMSVFLTGGT…PRQLNALQSE (288 aa)) is reductase (R) domain.

Belongs to the NRP synthetase family.

It catalyses the reaction L-proline + L-tryptophan + 2 ATP + NADPH = (S)-3-(indol-3-ylmethyl)-6,7,8,8a-tetrahydropyrrolo[1,2-a]pyrazin-1-one + 2 AMP + 2 diphosphate + NADP(+) + H2O + H(+). In terms of biological role, nonribisomal peptide synthetase; part of the gene cluster that mediates the biosynthesis of malbrancheamide, a dichlorinated fungal indole alkaloid that belongs to a family of natural products containing a characteristic bicyclo[2.2.2]diazaoctane core. The first step of malbrancheamide biosynthesis involves coupling of L-proline and L-tryptophan by malG, a bimodular NRPS, to produce L-Pro-L-Trp aldehyde through reductive offloading. This compound undergoes spontaneous cyclization and dehydration to give a dienamine which is reverse prenylated at C-2 by malE. The other prenyltransferase present in the cluster, malB, displays modest activity, suggesting that may be a redundant gene in the pathway. Subsequently, a [4+2] Diels-Alder cyclo-addition catalyzed by the bifunctional enzyme malC forms the characteristic bicyclo[2.2.2]diazaoctane ring of premalbrancheamid. Finally, the flavin-dependent halogenase malA catalyzes the iterative dichlorination of the indole ring of premalbrancheamide to yield C-9 monochlorinated malbrancheamide B, C-8 monochlorinated isomalbrancheamide B, and dichlorinated malbrancheamide. MalA is also able to brominate premalbrancheamide at C-9 to yield malbrancheamide C, and, to a lesser extend, at C-8 to yield isomalbrancheamide C. Finally, malA can brominate C-9 monochlorinated malbrancheamide B at C-8 to yield malbrancheamide D, or C-8 monochlorinated isomalbrancheamide B at C-9 to produce isomalbrancheamide D. The sequence is that of Nonribisomal peptide synthetase malG from Malbranchea aurantiaca.